A 390-amino-acid polypeptide reads, in one-letter code: Protein phosphatase 1B (390 aa).

Over residues 1–14 the composition is skewed to basic and acidic residues; the sequence is MGAFLDKPKTEKHN. Residues 1–20 form a disordered region; the sequence is MGAFLDKPKTEKHNAHGAGN. A lipid anchor (N-myristoyl glycine) is attached at G2. K12 participates in a covalent cross-link: Glycyl lysine isopeptide (Lys-Gly) (interchain with G-Cter in ISG15). The 273-residue stretch at 23-295 folds into the PPM-type phosphatase domain; it reads RYGLSSMQGW…DNMSIVLVCF (273 aa). Positions 60, 61, 243, and 286 each coordinate Mn(2+). The interval 371–390 is disordered; sequence NPNKDNDGGAGDLEDSLVAL. S386 is subject to Phosphoserine.

This sequence belongs to the PP2C family. In terms of assembly, monomer. Interacts with PAK6. Interacts with the phosphorylated form of IKBKB/IKKB. Requires Mg(2+) as cofactor. Mn(2+) serves as cofactor. Isgylation negatively regulates its activity. In terms of processing, N-myristoylation is essential for the recognition of its substrates for dephosphorylation.

It is found in the cytoplasm. The protein localises to the cytosol. Its subcellular location is the membrane. It carries out the reaction O-phospho-L-seryl-[protein] + H2O = L-seryl-[protein] + phosphate. The enzyme catalyses O-phospho-L-threonyl-[protein] + H2O = L-threonyl-[protein] + phosphate. Enzyme with a broad specificity. Dephosphorylates PRKAA1 and PRKAA2. Inhibits TBK1-mediated antiviral signaling by dephosphorylating it at 'Ser-172'. Plays an important role in the termination of TNF-alpha-mediated NF-kappa-B activation through dephosphorylating and inactivating IKBKB/IKKB. The chain is Protein phosphatase 1B (Ppm1b) from Rattus norvegicus (Rat).